The sequence spans 540 residues: Glucose-6-phosphate isomerase (540 aa).

E350 functions as the Proton donor in the catalytic mechanism. Residues H381 and K503 contribute to the active site.

It belongs to the GPI family.

The protein localises to the cytoplasm. The catalysed reaction is alpha-D-glucose 6-phosphate = beta-D-fructose 6-phosphate. The protein operates within carbohydrate biosynthesis; gluconeogenesis. It participates in carbohydrate degradation; glycolysis; D-glyceraldehyde 3-phosphate and glycerone phosphate from D-glucose: step 2/4. Functionally, catalyzes the reversible isomerization of glucose-6-phosphate to fructose-6-phosphate. This Burkholderia mallei (strain NCTC 10247) protein is Glucose-6-phosphate isomerase.